A 383-amino-acid polypeptide reads, in one-letter code: Succinyl-diaminopimelate desuccinylase (383 aa).

His68 provides a ligand contact to Zn(2+). The active site involves Asp70. Asp100 contacts Zn(2+). Glu130 serves as the catalytic Proton acceptor. Zn(2+) contacts are provided by Glu131, Glu159, and His352.

The protein belongs to the peptidase M20A family. DapE subfamily. Homodimer. It depends on Zn(2+) as a cofactor. Co(2+) is required as a cofactor.

It catalyses the reaction N-succinyl-(2S,6S)-2,6-diaminopimelate + H2O = (2S,6S)-2,6-diaminopimelate + succinate. It participates in amino-acid biosynthesis; L-lysine biosynthesis via DAP pathway; LL-2,6-diaminopimelate from (S)-tetrahydrodipicolinate (succinylase route): step 3/3. In terms of biological role, catalyzes the hydrolysis of N-succinyl-L,L-diaminopimelic acid (SDAP), forming succinate and LL-2,6-diaminopimelate (DAP), an intermediate involved in the bacterial biosynthesis of lysine and meso-diaminopimelic acid, an essential component of bacterial cell walls. The protein is Succinyl-diaminopimelate desuccinylase of Granulibacter bethesdensis (strain ATCC BAA-1260 / CGDNIH1).